Here is a 451-residue protein sequence, read N- to C-terminus: tRNA modification GTPase MnmE (451 aa).

Positions 25, 82, and 121 each coordinate (6S)-5-formyl-5,6,7,8-tetrahydrofolate. One can recognise a TrmE-type G domain in the interval 217–374; the sequence is GMSVVILGRP…LKQHLKTEMG (158 aa). Asn227 is a binding site for K(+). GTP-binding positions include 227–232, 246–252, and 271–274; these read NAGKSS, TDIAGTT, and DTAG. Ser231 is a Mg(2+) binding site. Residues Thr246, Ile248, and Thr251 each coordinate K(+). Thr252 serves as a coordination point for Mg(2+). Residue Lys451 coordinates (6S)-5-formyl-5,6,7,8-tetrahydrofolate.

This sequence belongs to the TRAFAC class TrmE-Era-EngA-EngB-Septin-like GTPase superfamily. TrmE GTPase family. As to quaternary structure, homodimer. Heterotetramer of two MnmE and two MnmG subunits. Requires K(+) as cofactor.

It localises to the cytoplasm. Its function is as follows. Exhibits a very high intrinsic GTPase hydrolysis rate. Involved in the addition of a carboxymethylaminomethyl (cmnm) group at the wobble position (U34) of certain tRNAs, forming tRNA-cmnm(5)s(2)U34. The sequence is that of tRNA modification GTPase MnmE from Hydrogenovibrio crunogenus (strain DSM 25203 / XCL-2) (Thiomicrospira crunogena).